The following is a 539-amino-acid chain: Phosphoenolpyruvate carboxykinase (ATP) (539 aa).

3 residues coordinate substrate: R61, Y195, and K201. Residues K201, H220, and 238-246 contribute to the ATP site; that span reads GLSGTGKTT. The Mn(2+) site is built by K201 and H220. D259 provides a ligand contact to Mn(2+). 3 residues coordinate ATP: E287, R325, and T450. R325 lines the substrate pocket.

Belongs to the phosphoenolpyruvate carboxykinase (ATP) family. Mn(2+) is required as a cofactor.

Its subcellular location is the cytoplasm. The enzyme catalyses oxaloacetate + ATP = phosphoenolpyruvate + ADP + CO2. The protein operates within carbohydrate biosynthesis; gluconeogenesis. Its function is as follows. Involved in the gluconeogenesis. Catalyzes the conversion of oxaloacetate (OAA) to phosphoenolpyruvate (PEP) through direct phosphoryl transfer between the nucleoside triphosphate and OAA. This Methylorubrum extorquens (strain CM4 / NCIMB 13688) (Methylobacterium extorquens) protein is Phosphoenolpyruvate carboxykinase (ATP).